The primary structure comprises 534 residues: Invertase (534 aa).

The N-terminal stretch at methionine 1–alanine 21 is a signal peptide. Residues tryptophan 46 to aspartate 49 and glutamine 67 each bind substrate. Residue aspartate 49 is part of the active site. The N-linked (GlcNAc...) asparagine glycan is linked to asparagine 71. Phenylalanine 109–serine 110 lines the substrate pocket. Residues asparagine 118, asparagine 119, and asparagine 172 are each glycosylated (N-linked (GlcNAc...) asparagine). Substrate is bound at residue arginine 177–aspartate 178. Asparagine 218 carries an N-linked (GlcNAc...) asparagine glycan. Residues glutamate 229 and tryptophan 313 each coordinate substrate. 4 N-linked (GlcNAc...) asparagine glycosylation sites follow: asparagine 375, asparagine 381, asparagine 392, and asparagine 420.

The protein belongs to the glycosyl hydrolase 32 family.

It catalyses the reaction Hydrolysis of terminal non-reducing beta-D-fructofuranoside residues in beta-D-fructofuranosides.. The protein is Invertase (INV) of Debaryomyces hansenii (strain ATCC 36239 / CBS 767 / BCRC 21394 / JCM 1990 / NBRC 0083 / IGC 2968) (Yeast).